Here is a 239-residue protein sequence, read N- to C-terminus: MAKLGLNVDHIATVRQARGGSEPDPVTAAAIGELAGAEGITIHLREDRRHIQDRDLEILRRTVQTKLNLEMAATDEMVGIACRIRPEQCTLVPEKRQELTTEGGLDVLGNLAGITRATSSLREAGIVVSLFVDPTVEQIRASKESGADAIEIHTGRYAEARSEKSRHHELAAIREAIRLGNELGLTVHAGHGLNYVNILPLTGLAGIEEFNIGHSIISRAMLVGLDRAVREMVTLIRRP.

Asn-7 is a 3-amino-2-oxopropyl phosphate binding site. 9–10 provides a ligand contact to 1-deoxy-D-xylulose 5-phosphate; that stretch reads DH. Arg-18 serves as a coordination point for 3-amino-2-oxopropyl phosphate. His-43 acts as the Proton acceptor in catalysis. 1-deoxy-D-xylulose 5-phosphate contacts are provided by Arg-45 and His-50. Glu-70 serves as the catalytic Proton acceptor. Thr-100 lines the 1-deoxy-D-xylulose 5-phosphate pocket. The active-site Proton donor is the His-191. Residues Gly-192 and 213–214 contribute to the 3-amino-2-oxopropyl phosphate site; that span reads GH.

The protein belongs to the PNP synthase family. Homooctamer; tetramer of dimers.

It is found in the cytoplasm. The catalysed reaction is 3-amino-2-oxopropyl phosphate + 1-deoxy-D-xylulose 5-phosphate = pyridoxine 5'-phosphate + phosphate + 2 H2O + H(+). It participates in cofactor biosynthesis; pyridoxine 5'-phosphate biosynthesis; pyridoxine 5'-phosphate from D-erythrose 4-phosphate: step 5/5. Its function is as follows. Catalyzes the complicated ring closure reaction between the two acyclic compounds 1-deoxy-D-xylulose-5-phosphate (DXP) and 3-amino-2-oxopropyl phosphate (1-amino-acetone-3-phosphate or AAP) to form pyridoxine 5'-phosphate (PNP) and inorganic phosphate. The polypeptide is Pyridoxine 5'-phosphate synthase (Trichlorobacter lovleyi (strain ATCC BAA-1151 / DSM 17278 / SZ) (Geobacter lovleyi)).